A 254-amino-acid polypeptide reads, in one-letter code: Persulfide dioxygenase ETHE1, mitochondrial (254 aa).

A mitochondrion-targeting transit peptide spans 1 to 7; the sequence is MASAVVR. A phosphoserine mark is found at S14, S17, and S19. An N6-acetyllysine; alternate modification is found at K32. Residue K32 is modified to N6-succinyllysine; alternate. Residue K66 is modified to N6-acetyllysine. Residues H79, H135, and D154 each coordinate Fe cation. An N6-acetyllysine; alternate modification is found at K172. Position 172 is an N6-succinyllysine; alternate (K172).

It belongs to the metallo-beta-lactamase superfamily. Glyoxalase II family. In terms of assembly, homodimer. Monomer. Interacts with TST. May interact with RELA. It depends on Fe(2+) as a cofactor.

Its subcellular location is the cytoplasm. The protein localises to the nucleus. The protein resides in the mitochondrion matrix. It catalyses the reaction S-sulfanylglutathione + O2 + H2O = sulfite + glutathione + 2 H(+). Its function is as follows. First described as a protein that can shuttle between the nucleus and the cytoplasm and suppress p53-induced apoptosis by sequestering the transcription factor RELA/NFKB3 in the cytoplasm and preventing its accumulation in the nucleus. Sulfur dioxygenase that plays an essential role in hydrogen sulfide catabolism in the mitochondrial matrix. Hydrogen sulfide (H(2)S) is first oxidized by SQRDL, giving rise to cysteine persulfide residues. ETHE1 consumes molecular oxygen to catalyze the oxidation of the persulfide, once it has been transferred to a thiophilic acceptor, such as glutathione (R-SSH). Plays an important role in metabolic homeostasis in mitochondria by metabolizing hydrogen sulfide and preventing the accumulation of supraphysiological H(2)S levels that have toxic effects, due to the inhibition of cytochrome c oxidase. In Mus musculus (Mouse), this protein is Persulfide dioxygenase ETHE1, mitochondrial (Ethe1).